A 239-amino-acid polypeptide reads, in one-letter code: Pimeloyl-[acyl-carrier protein] methyl ester esterase (239 aa).

Substrate-binding positions include W20, 77-78, and 138-142; these read SM and FISLQ. S77 serves as the catalytic Nucleophile. Active-site residues include D192 and H220. A substrate-binding site is contributed by H220.

This sequence belongs to the AB hydrolase superfamily. Carboxylesterase BioH family. In terms of assembly, monomer.

Its subcellular location is the cytoplasm. The catalysed reaction is 6-carboxyhexanoyl-[ACP] methyl ester + H2O = 6-carboxyhexanoyl-[ACP] + methanol + H(+). It functions in the pathway cofactor biosynthesis; biotin biosynthesis. The physiological role of BioH is to remove the methyl group introduced by BioC when the pimeloyl moiety is complete. It allows to synthesize pimeloyl-ACP via the fatty acid synthetic pathway through the hydrolysis of the ester bonds of pimeloyl-ACP esters. The protein is Pimeloyl-[acyl-carrier protein] methyl ester esterase of Legionella pneumophila (strain Paris).